The primary structure comprises 194 residues: Cell division protein SepF (194 aa).

Disordered regions lie at residues 35 to 54 (DHRS…DSSP) and 159 to 194 (SAPS…AGGL).

Belongs to the SepF family. As to quaternary structure, homodimer. Interacts with FtsZ.

It is found in the cytoplasm. Cell division protein that is part of the divisome complex and is recruited early to the Z-ring. Probably stimulates Z-ring formation, perhaps through the cross-linking of FtsZ protofilaments. Its function overlaps with FtsA. This is Cell division protein SepF from Prochlorococcus marinus (strain MIT 9313).